A 398-amino-acid chain; its full sequence is 1-deoxy-D-xylulose 5-phosphate reductoisomerase (398 aa).

NADPH-binding residues include T11, G12, S13, I14, and N125. 1-deoxy-D-xylulose 5-phosphate is bound at residue K126. NADPH is bound at residue E127. Mn(2+) is bound at residue D151. 1-deoxy-D-xylulose 5-phosphate is bound by residues S152, E153, S186, and H209. E153 is a Mn(2+) binding site. Residue G215 coordinates NADPH. 1-deoxy-D-xylulose 5-phosphate-binding residues include S222, N227, K228, and E231. E231 provides a ligand contact to Mn(2+).

The protein belongs to the DXR family. The cofactor is Mg(2+). Requires Mn(2+) as cofactor.

The enzyme catalyses 2-C-methyl-D-erythritol 4-phosphate + NADP(+) = 1-deoxy-D-xylulose 5-phosphate + NADPH + H(+). The protein operates within isoprenoid biosynthesis; isopentenyl diphosphate biosynthesis via DXP pathway; isopentenyl diphosphate from 1-deoxy-D-xylulose 5-phosphate: step 1/6. Catalyzes the NADPH-dependent rearrangement and reduction of 1-deoxy-D-xylulose-5-phosphate (DXP) to 2-C-methyl-D-erythritol 4-phosphate (MEP). The polypeptide is 1-deoxy-D-xylulose 5-phosphate reductoisomerase (Acinetobacter baumannii (strain ATCC 17978 / DSM 105126 / CIP 53.77 / LMG 1025 / NCDC KC755 / 5377)).